The following is a 232-amino-acid chain: 6-phosphogluconolactonase (232 aa).

This sequence belongs to the glucosamine/galactosamine-6-phosphate isomerase family. 6-phosphogluconolactonase subfamily.

It catalyses the reaction 6-phospho-D-glucono-1,5-lactone + H2O = 6-phospho-D-gluconate + H(+). The protein operates within carbohydrate degradation; pentose phosphate pathway; D-ribulose 5-phosphate from D-glucose 6-phosphate (oxidative stage): step 2/3. Its function is as follows. Hydrolysis of 6-phosphogluconolactone to 6-phosphogluconate. The chain is 6-phosphogluconolactonase (pgl) from Caulobacter vibrioides (strain ATCC 19089 / CIP 103742 / CB 15) (Caulobacter crescentus).